A 374-amino-acid polypeptide reads, in one-letter code: Ribonuclease D (374 aa).

A 3'-5' exonuclease domain is found at 6–171 (IISTTEDLKK…RATRVILLSK (166 aa)). The HRDC domain occupies 213–292 (DRKSIGVAQE…ARALNKKEVD (80 aa)).

It belongs to the RNase D family. Requires a divalent metal cation as cofactor.

Its subcellular location is the cytoplasm. The catalysed reaction is Exonucleolytic cleavage that removes extra residues from the 3'-terminus of tRNA to produce 5'-mononucleotides.. Exonuclease involved in the 3' processing of various precursor tRNAs. Initiates hydrolysis at the 3'-terminus of an RNA molecule and releases 5'-mononucleotides. The polypeptide is Ribonuclease D (Desulfotalea psychrophila (strain LSv54 / DSM 12343)).